Reading from the N-terminus, the 688-residue chain is Methionine--tRNA ligase (688 aa).

The 'HIGH' region signature appears at 13–23; it reads PYANGNFHIGH. The Zn(2+) site is built by cysteine 144, cysteine 147, cysteine 157, and cysteine 160. Positions 342–346 match the 'KMSKS' region motif; that stretch reads KMSKS. Lysine 345 contacts ATP. One can recognise a tRNA-binding domain in the interval 582 to 688; that stretch reads DFAKVDLRIA…PGAQPGMRIH (107 aa).

It belongs to the class-I aminoacyl-tRNA synthetase family. MetG type 1 subfamily. In terms of assembly, homodimer. Requires Zn(2+) as cofactor.

The protein localises to the cytoplasm. The catalysed reaction is tRNA(Met) + L-methionine + ATP = L-methionyl-tRNA(Met) + AMP + diphosphate. Its function is as follows. Is required not only for elongation of protein synthesis but also for the initiation of all mRNA translation through initiator tRNA(fMet) aminoacylation. This chain is Methionine--tRNA ligase, found in Acidovorax sp. (strain JS42).